The chain runs to 91 residues: UPF0213 protein NMC1807 (91 aa).

The GIY-YIG domain maps to 4–83 (SNWSVYLILC…AAQKRQLWEQ (80 aa)).

Belongs to the UPF0213 family.

The sequence is that of UPF0213 protein NMC1807 from Neisseria meningitidis serogroup C / serotype 2a (strain ATCC 700532 / DSM 15464 / FAM18).